A 249-amino-acid chain; its full sequence is Ribosomal RNA small subunit methyltransferase J (249 aa).

Residues 101-102 (RD), 117-118 (ER), and Asp171 contribute to the S-adenosyl-L-methionine site.

This sequence belongs to the methyltransferase superfamily. RsmJ family.

It is found in the cytoplasm. The catalysed reaction is guanosine(1516) in 16S rRNA + S-adenosyl-L-methionine = N(2)-methylguanosine(1516) in 16S rRNA + S-adenosyl-L-homocysteine + H(+). Specifically methylates the guanosine in position 1516 of 16S rRNA. The polypeptide is Ribosomal RNA small subunit methyltransferase J (Tolumonas auensis (strain DSM 9187 / NBRC 110442 / TA 4)).